Consider the following 194-residue polypeptide: Prostaglandin-H2 D-isomerase (194 aa).

The first 24 residues, 1–24 (MAASHTLWMGLVLLGVLGVLQTRA), serve as a signal peptide directing secretion. A Pyrrolidone carboxylic acid modification is found at glutamine 25. Asparagine 51 carries an N-linked (GlcNAc...) asparagine glycan. Cysteine 65 acts as the Nucleophile in catalysis. Asparagine 78 carries N-linked (GlcNAc...) asparagine glycosylation. A disulfide bond links cysteine 89 and cysteine 189.

Belongs to the calycin superfamily. Lipocalin family. In terms of assembly, monomer. In terms of tissue distribution, in the male reproductive system, it is expressed in the testis and epididymis, and is secreted into the seminal fluid.

It localises to the rough endoplasmic reticulum. The protein localises to the nucleus membrane. The protein resides in the golgi apparatus. It is found in the cytoplasm. Its subcellular location is the perinuclear region. It localises to the secreted. The catalysed reaction is prostaglandin H2 = prostaglandin D2. Its function is as follows. Catalyzes the conversion of PGH2 to PGD2, a prostaglandin involved in smooth muscle contraction/relaxation and a potent inhibitor of platelet aggregation. Involved in a variety of CNS functions, such as sedation, NREM sleep and PGE2-induced allodynia, and may have an anti-apoptotic role in oligodendrocytes. Binds small non-substrate lipophilic molecules, including biliverdin, bilirubin, retinal, retinoic acid and thyroid hormone, and may act as a scavenger for harmful hydrophobic molecules and as a secretory retinoid and thyroid hormone transporter. Possibly involved in development and maintenance of the blood-brain, blood-retina, blood-aqueous humor and blood-testis barrier. It is likely to play important roles in both maturation and maintenance of the central nervous system and male reproductive system. Involved in PLA2G3-dependent maturation of mast cells. PLA2G3 is secreted by immature mast cells and acts on nearby fibroblasts upstream to PTDGS to synthesize PGD2, which in turn promotes mast cell maturation and degranulation via PTGDR. This Equus caballus (Horse) protein is Prostaglandin-H2 D-isomerase (PTGDS).